A 98-amino-acid chain; its full sequence is UPF0213 protein in ldhD 5'region (98 aa).

The 78-residue stretch at 7 to 84 (NGFYFYVLWC…KKQSRKEKLK (78 aa)) folds into the GIY-YIG domain.

This sequence belongs to the UPF0213 family.

The sequence is that of UPF0213 protein in ldhD 5'region from Pediococcus acidilactici.